Reading from the N-terminus, the 364-residue chain is Chaperone protein DnaJ (364 aa).

A J domain is found at 4-69 (DYYEILGLSK…NKKAKYDRFG (66 aa)). The CR-type zinc-finger motif lies at 135 to 213 (GYKNNINITR…CKGKGRITNQ (79 aa)). Residues Cys-148, Cys-151, Cys-165, Cys-168, Cys-187, Cys-190, Cys-201, and Cys-204 each contribute to the Zn(2+) site. 4 CXXCXGXG motif repeats span residues 148-155 (CHSCLGKK), 165-172 (CNMCNGSG), 187-194 (CSKCYGEG), and 201-208 (CKSCKGKG).

Belongs to the DnaJ family. In terms of assembly, homodimer. Zn(2+) is required as a cofactor.

Its subcellular location is the cytoplasm. Participates actively in the response to hyperosmotic and heat shock by preventing the aggregation of stress-denatured proteins and by disaggregating proteins, also in an autonomous, DnaK-independent fashion. Unfolded proteins bind initially to DnaJ; upon interaction with the DnaJ-bound protein, DnaK hydrolyzes its bound ATP, resulting in the formation of a stable complex. GrpE releases ADP from DnaK; ATP binding to DnaK triggers the release of the substrate protein, thus completing the reaction cycle. Several rounds of ATP-dependent interactions between DnaJ, DnaK and GrpE are required for fully efficient folding. Also involved, together with DnaK and GrpE, in the DNA replication of plasmids through activation of initiation proteins. This chain is Chaperone protein DnaJ, found in Borrelia garinii subsp. bavariensis (strain ATCC BAA-2496 / DSM 23469 / PBi) (Borreliella bavariensis).